Here is a 172-residue protein sequence, read N- to C-terminus: C-phycocyanin beta chain (172 aa).

(2R,3E)-phycocyanobilin-binding positions include N35, D39, N72, R77, C82, 82–88, 149–151, and C153; these read CLRDMEI and TTG. N72 carries the N4-methylasparagine modification.

The protein belongs to the phycobiliprotein family. As to quaternary structure, heterodimer of an alpha and a beta subunit. Dimers further assemble into trimers and the trimers into hexamers. The basic functional unit of phycobiliproteins is a ring-shaped hexamer formed from two back-to-back trimers contacting via the alpha chain subunits. The trimers are composed of alpha/beta subunit heterodimers arranged around a three-fold axis of symmetry. The phycoerythrins also contain a gamma subunit which is located in the center of the hexamer. Contains two covalently linked phycocyanobilin chromophores.

The protein localises to the plastid. It localises to the chloroplast thylakoid membrane. Its function is as follows. Light-harvesting photosynthetic tetrapyrrole chromophore-protein from the phycobiliprotein complex (phycobilisome, PBS). Phycocyanin is the major phycobiliprotein in the PBS rod. The protein is C-phycocyanin beta chain (cpcB) of Galdieria sulphuraria (Red alga).